The sequence spans 478 residues: Proline--tRNA ligase (478 aa).

This sequence belongs to the class-II aminoacyl-tRNA synthetase family. ProS type 3 subfamily. As to quaternary structure, homodimer.

It is found in the cytoplasm. The catalysed reaction is tRNA(Pro) + L-proline + ATP = L-prolyl-tRNA(Pro) + AMP + diphosphate. Functionally, catalyzes the attachment of proline to tRNA(Pro) in a two-step reaction: proline is first activated by ATP to form Pro-AMP and then transferred to the acceptor end of tRNA(Pro). In Clostridium botulinum (strain Okra / Type B1), this protein is Proline--tRNA ligase.